The chain runs to 485 residues: MLLLELKKTNQTLETIHFIGIGGVGMSGIAEILYNLGYKVQGSDLVENYNTKRLESYGIKIFLGHAEQNITNVSYVVISSAINPKNPEIKEALERKIPIIRRADMLAELMRLKCSVAVSGSHGKTTTTSLVACLFEAAGLCPTVINGGIINNKSTNAYLGSSNYLIAEADESDATFIHIPSTIAIITNIDPEHLDYYRDFETLIGAFRSFITNLPFYGFAVCCIDHKIVRKLVDDITERKIVTYGIDSEDAHIIAFNINTDIASSTFDVKISLPNVLGTTIIEKITIPTPGRHNILNSLAAIAVGIELDFGIKAIKNGFNNFKGVKRRFTKVAEYNNASIIDDYAHHPEEIKATLATAKNIANKQNGKVIAIFQPHRYSRMQYLFDDFMLCFADADILYITDIYAAGENPIEGITGRSLVDKITKRKHHDKANFLAELDDAVGVIIDNAASGDMIIMMGAGNISSFANELEGRLSSRGFSCHTVV.

120 to 126 (GSHGKTT) serves as a coordination point for ATP.

It belongs to the MurCDEF family.

It localises to the cytoplasm. It catalyses the reaction UDP-N-acetyl-alpha-D-muramate + L-alanine + ATP = UDP-N-acetyl-alpha-D-muramoyl-L-alanine + ADP + phosphate + H(+). Its pathway is cell wall biogenesis; peptidoglycan biosynthesis. Cell wall formation. This is UDP-N-acetylmuramate--L-alanine ligase from Rickettsia conorii (strain ATCC VR-613 / Malish 7).